The sequence spans 467 residues: UDP-N-acetylmuramate--L-alanine ligase (467 aa).

Position 114 to 120 (114 to 120 (GTHGKTT)) interacts with ATP.

The protein belongs to the MurCDEF family.

Its subcellular location is the cytoplasm. It catalyses the reaction UDP-N-acetyl-alpha-D-muramate + L-alanine + ATP = UDP-N-acetyl-alpha-D-muramoyl-L-alanine + ADP + phosphate + H(+). Its pathway is cell wall biogenesis; peptidoglycan biosynthesis. In terms of biological role, cell wall formation. The protein is UDP-N-acetylmuramate--L-alanine ligase of Rhodopseudomonas palustris (strain ATCC BAA-98 / CGA009).